The sequence spans 295 residues: Glutamyl-Q tRNA(Asp) synthetase (295 aa).

L-glutamate is bound by residues 9 to 13 and E45; that span reads RFAPT. Residues 12-22 carry the 'HIGH' region motif; the sequence is PTPSGFLHFGS. Residues C101, C103, Y115, and C119 each contribute to the Zn(2+) site. Positions 172 and 190 each coordinate L-glutamate. The short motif at 228–232 is the 'KMSKS' region element; it reads KLGKS. K231 lines the ATP pocket.

The protein belongs to the class-I aminoacyl-tRNA synthetase family. GluQ subfamily. Requires Zn(2+) as cofactor.

In terms of biological role, catalyzes the tRNA-independent activation of glutamate in presence of ATP and the subsequent transfer of glutamate onto a tRNA(Asp). Glutamate is transferred on the 2-amino-5-(4,5-dihydroxy-2-cyclopenten-1-yl) moiety of the queuosine in the wobble position of the QUC anticodon. The protein is Glutamyl-Q tRNA(Asp) synthetase of Pseudomonas putida (strain W619).